A 230-amino-acid polypeptide reads, in one-letter code: Sugar fermentation stimulation protein homolog (230 aa).

The protein belongs to the SfsA family.

The chain is Sugar fermentation stimulation protein homolog from Clostridium kluyveri (strain NBRC 12016).